A 219-amino-acid polypeptide reads, in one-letter code: C-type lectin domain family 4 member E (219 aa).

Over Met1 to Ser19 the chain is Cytoplasmic. A helical; Signal-anchor for type II membrane protein membrane pass occupies residues Gln20–Thr40. Over Arg41–Leu219 the chain is Extracellular. The N-linked (GlcNAc...) asparagine glycan is linked to Asn62. Residues Cys80 and Cys91 are joined by a disulfide bond. The C-type lectin domain maps to Phe87 to Glu206. Residue Asn107 is glycosylated (N-linked (GlcNAc...) asparagine). 2 disulfides stabilise this stretch: Cys108-Cys205 and Cys179-Cys197. The Ca(2+) site is built by Val117, Asn119, Glu123, Glu169, Asn171, Asn193, Asp194, and Glu206. The Confers specificity for glucose/mannose-type carbohydrates signature appears at Glu169–Asn171.

In terms of assembly, monomer and homodimer. Interacts with signaling adapter Fc receptor gamma chain/FCER1G to form a functional complex; the interaction is direct. Alternatively, acts as a bridge for interaction between CLEC4D and FCER1G. A heterodimer of CLEC4E and CLEC4D associates with FCER1G to form a functional complex. Interacts with SAP130 nuclear protein that is released from necrotic cells; the interaction is direct. Expressed in monocytes and macrophages.

It is found in the cell membrane. The protein resides in the cell projection. It localises to the phagocytic cup. Calcium-dependent lectin that acts as a pattern recognition receptor (PRR) of the innate immune system: recognizes damage-associated molecular patterns (DAMPs) of abnormal self and pathogen-associated molecular patterns (PAMPs) of bacteria and fungi. The PAMPs notably include mycobacterial trehalose 6,6'-dimycolate (TDM), a cell wall glycolipid with potent adjuvant immunomodulatory functions. Interacts with signaling adapter Fc receptor gamma chain/FCER1G to form a functional complex in myeloid cells. Binding of mycobacterial trehalose 6,6'-dimycolate (TDM) to this receptor complex leads to phosphorylation of the immunoreceptor tyrosine-based activation motif (ITAM) of FCER1G, triggering activation of SYK, CARD9 and NF-kappa-B, consequently driving maturation of antigen-presenting cells and shaping antigen-specific priming of T-cells toward effector T-helper 1 and T-helper 17 cell subtypes. Also recognizes alpha-mannose residues on pathogenic fungi of the genus Malassezia and mediates macrophage activation. Through recognition of DAMPs released upon nonhomeostatic cell death, enables immune sensing of damaged self and promotes inflammatory cell infiltration into the damaged tissue. This chain is C-type lectin domain family 4 member E, found in Homo sapiens (Human).